We begin with the raw amino-acid sequence, 532 residues long: MRSVSYVQRVALEFSGSLFPHAICLGDVDNDTLNELVVGDTSGKLSVYKNDDSRPWLTCSCQGMLTCVGVGDVCNKGKNLVVAVSAEGWFHLCDLTPAKSLDGSGHHETLGGEEQRPVFKQHIPANTKVMLISDIDGDGRCELVVGYTDRVVRAFRWEDLGEGAEHPMGQLVLLKKWMLEGQVDSLSVTPGPLGVPELMVSQPGCAYAILLCTWNKDPGATPTSEGPMEGHSGAPGCPGRCVAPDLWPHPQQERLHSPHRQHQASHSPDSSASGLFALCTLDGTLKLMEEADRLLWSVQVDHQLFALEKLDVTGNGHEEVVACAWDGQTYIIDHNRTVVRFQVDENIRAFCAGLYACKDSRNSPCLVYVTFNQKIYVYWEVQLERMESTNLLKVLEAQPSSGSCWESWAWILMSCPPPAPCFTKPSTIQTSLHSAPPRAPRTPPSWTGFLAEQGAFCTSPPPPPPQLSGIWKTGSAHYWGRMAAPLGCGDCRPPGRLGEGRDKLPLCPFPCVPHLSRQQALPLPRAPYSCCL.

Residues 19–48 form an FG-GAP 1; atypical repeat; sequence FPHAICLGDVDNDTLNELVVGDTSGKLSVY. Serine 104 is modified (phosphoserine). The stretch at 126–155 is one FG-GAP 2; atypical repeat; it reads NTKVMLISDIDGDGRCELVVGYTDRVVRAF. Residues 248–271 form a disordered region; the sequence is PHPQQERLHSPHRQHQASHSPDSS.

In terms of assembly, part of the KICSTOR complex composed of KPTN, ITFG2, KICS2 and SZT2. SZT2 probably serves as a link between the other three proteins in the KICSTOR complex and may mediate the direct interaction with the GATOR complex via GATOR1. The KICSTOR complex interacts directly with the GATOR1 complex and most probably indirectly with the GATOR2 complex in an amino acid-independent manner.

The protein resides in the lysosome membrane. In terms of biological role, as part of the KICSTOR complex functions in the amino acid-sensing branch of the TORC1 signaling pathway. Recruits, in an amino acid-independent manner, the GATOR1 complex to the lysosomal membranes and allows its interaction with GATOR2 and the RAG GTPases. Functions upstream of the RAG GTPases and is required to negatively regulate mTORC1 signaling in absence of amino acids. In absence of the KICSTOR complex mTORC1 is constitutively localized to the lysosome and activated. The KICSTOR complex is also probably involved in the regulation of mTORC1 by glucose. The polypeptide is KICSTOR complex protein ITFG2 (Bos taurus (Bovine)).